A 508-amino-acid polypeptide reads, in one-letter code: GTPase Obg (508 aa).

In terms of domain architecture, Obg spans 2–159 (ARFVDRVVLH…HDVILELKSM (158 aa)). The region spanning 160 to 341 (ADIGLVGFPS…LKYAMLDLVQ (182 aa)) is the OBG-type G domain. GTP contacts are provided by residues 166–173 (GFPSAGKS), 191–195 (FTTLQ), 212–215 (DVPG), 292–295 (NKAD), and 322–324 (SAV). Mg(2+) contacts are provided by Ser173 and Thr193. Positions 364–444 (DARKKNKDFE…IGEVSFEWEP (81 aa)) constitute an OCT domain.

The protein belongs to the TRAFAC class OBG-HflX-like GTPase superfamily. OBG GTPase family. In terms of assembly, monomer. Mg(2+) is required as a cofactor.

It is found in the cytoplasm. Its function is as follows. An essential GTPase which binds GTP, GDP and possibly (p)ppGpp with moderate affinity, with high nucleotide exchange rates and a fairly low GTP hydrolysis rate. Plays a role in control of the cell cycle, stress response, ribosome biogenesis and in those bacteria that undergo differentiation, in morphogenesis control. This is GTPase Obg from Corynebacterium diphtheriae (strain ATCC 700971 / NCTC 13129 / Biotype gravis).